We begin with the raw amino-acid sequence, 353 residues long: Photosystem II protein D1 (353 aa).

An N-acetylthreonine modification is found at Thr2. Residue Thr2 is modified to Phosphothreonine. 3 consecutive transmembrane segments (helical) span residues Tyr29–Ser46, His118–Leu133, and Trp142–Ala156. His118 lines the chlorophyll a pocket. A pheophytin a-binding site is contributed by Tyr126. Residues Asp170 and Glu189 each coordinate [CaMn4O5] cluster. The helical transmembrane segment at Phe197 to Leu218 threads the bilayer. Residue His198 coordinates chlorophyll a. A quinone is bound by residues His215 and Ser264–Phe265. His215 lines the Fe cation pocket. His272 contributes to the Fe cation binding site. A helical transmembrane segment spans residues Phe274–Leu288. 4 residues coordinate [CaMn4O5] cluster: His332, Glu333, Asp342, and Ala344. Residues Ser345–Ala353 constitute a propeptide that is removed on maturation.

The protein belongs to the reaction center PufL/M/PsbA/D family. In terms of assembly, PSII is composed of 1 copy each of membrane proteins PsbA, PsbB, PsbC, PsbD, PsbE, PsbF, PsbH, PsbI, PsbJ, PsbK, PsbL, PsbM, PsbT, PsbX, PsbY, PsbZ, Psb30/Ycf12, at least 3 peripheral proteins of the oxygen-evolving complex and a large number of cofactors. It forms dimeric complexes. It depends on The D1/D2 heterodimer binds P680, chlorophylls that are the primary electron donor of PSII, and subsequent electron acceptors. It shares a non-heme iron and each subunit binds pheophytin, quinone, additional chlorophylls, carotenoids and lipids. D1 provides most of the ligands for the Mn4-Ca-O5 cluster of the oxygen-evolving complex (OEC). There is also a Cl(-1) ion associated with D1 and D2, which is required for oxygen evolution. The PSII complex binds additional chlorophylls, carotenoids and specific lipids. as a cofactor. Post-translationally, the 9 C-terminal residues are removed, probably by CTPA (AC O04073); processing is essential to allow assembly of the oxygen-evolving complex and thus photosynthetic growth. In terms of processing, tyr-161 forms a radical intermediate that is referred to as redox-active TyrZ, YZ or Y-Z.

It localises to the plastid. The protein localises to the chloroplast thylakoid membrane. It carries out the reaction 2 a plastoquinone + 4 hnu + 2 H2O = 2 a plastoquinol + O2. Functionally, photosystem II (PSII) is a light-driven water:plastoquinone oxidoreductase that uses light energy to abstract electrons from H(2)O, generating O(2) and a proton gradient subsequently used for ATP formation. It consists of a core antenna complex that captures photons, and an electron transfer chain that converts photonic excitation into a charge separation. The D1/D2 (PsbA/PsbD) reaction center heterodimer binds P680, the primary electron donor of PSII as well as several subsequent electron acceptors. This chain is Photosystem II protein D1, found in Tetradesmus obliquus (Green alga).